Consider the following 116-residue polypeptide: Iron-sulfur cluster assembly protein CyaY (116 aa).

It belongs to the frataxin family.

Its function is as follows. Involved in iron-sulfur (Fe-S) cluster assembly. May act as a regulator of Fe-S biogenesis. In Buchnera aphidicola subsp. Acyrthosiphon pisum (strain APS) (Acyrthosiphon pisum symbiotic bacterium), this protein is Iron-sulfur cluster assembly protein CyaY.